We begin with the raw amino-acid sequence, 514 residues long: Steroid 17-alpha-hydroxylase/17,20 lyase (514 aa).

C445 lines the heme pocket.

Belongs to the cytochrome P450 family. Heme is required as a cofactor.

It is found in the membrane. The catalysed reaction is a C21-steroid + reduced [NADPH--hemoprotein reductase] + O2 = a 17alpha-hydroxy-C21-steroid + oxidized [NADPH--hemoprotein reductase] + H2O + H(+). It catalyses the reaction 17alpha-hydroxyprogesterone + reduced [NADPH--hemoprotein reductase] + O2 = androst-4-ene-3,17-dione + acetate + oxidized [NADPH--hemoprotein reductase] + H2O + 2 H(+). The enzyme catalyses 17alpha-hydroxypregnenolone + reduced [NADPH--hemoprotein reductase] + O2 = 3beta-hydroxyandrost-5-en-17-one + acetate + oxidized [NADPH--hemoprotein reductase] + H2O + 2 H(+). It functions in the pathway lipid metabolism; steroid biosynthesis. Functionally, conversion of pregnenolone and progesterone to their 17-alpha-hydroxylated products and subsequently to dehydroepiandrosterone (DHEA) and androstenedione. Catalyzes both the 17-alpha-hydroxylation and the 17,20-lyase reaction. The chain is Steroid 17-alpha-hydroxylase/17,20 lyase (cyp17a1) from Ictalurus punctatus (Channel catfish).